The sequence spans 168 residues: uncharacterized protein (168 aa).

5 helical membrane passes run tyrosine 15–leucine 33, leucine 41–leucine 57, tryptophan 73–leucine 93, valine 108–asparagine 128, and asparagine 129–isoleucine 149.

It localises to the cell membrane. This is an uncharacterized protein from Haemophilus influenzae (strain ATCC 51907 / DSM 11121 / KW20 / Rd).